Reading from the N-terminus, the 129-residue chain is Glycine cleavage system H protein (129 aa).

One can recognise a Lipoyl-binding domain in the interval 23 to 104 (SVTVGITQHA…CYAAWLFKLK (82 aa)). K64 is subject to N6-lipoyllysine.

This sequence belongs to the GcvH family. As to quaternary structure, the glycine cleavage system is composed of four proteins: P, T, L and H. The cofactor is (R)-lipoate.

In terms of biological role, the glycine cleavage system catalyzes the degradation of glycine. The H protein shuttles the methylamine group of glycine from the P protein to the T protein. In Nitrosomonas europaea (strain ATCC 19718 / CIP 103999 / KCTC 2705 / NBRC 14298), this protein is Glycine cleavage system H protein.